A 62-amino-acid chain; its full sequence is Photosystem II reaction center protein Z (62 aa).

The next 2 helical transmembrane spans lie at 8–28 (AVFA…LVFA) and 41–61 (FSGT…NSLI).

Belongs to the PsbZ family. As to quaternary structure, PSII is composed of 1 copy each of membrane proteins PsbA, PsbB, PsbC, PsbD, PsbE, PsbF, PsbH, PsbI, PsbJ, PsbK, PsbL, PsbM, PsbT, PsbY, PsbZ, Psb30/Ycf12, at least 3 peripheral proteins of the oxygen-evolving complex and a large number of cofactors. It forms dimeric complexes.

Its subcellular location is the plastid. The protein localises to the chloroplast thylakoid membrane. Its function is as follows. May control the interaction of photosystem II (PSII) cores with the light-harvesting antenna, regulates electron flow through the 2 photosystem reaction centers. PSII is a light-driven water plastoquinone oxidoreductase, using light energy to abstract electrons from H(2)O, generating a proton gradient subsequently used for ATP formation. This chain is Photosystem II reaction center protein Z, found in Hordeum vulgare (Barley).